Reading from the N-terminus, the 464-residue chain is Protein FAM90A3 (464 aa).

3 disordered regions span residues 1–42 (MMAR…DPRL), 70–389 (PATL…HDGA), and 411–437 (APSFHSPEKPGAFLAQSPHVSEKSEAP). Basic and acidic residues-rich tracts occupy residues 74–89 (GKKEGKENLKPWKPRV) and 97–114 (NKDKGEKEERPRQQDPQR). The segment covering 180 to 197 (LASLSPLRKASLSSSSSL) has biased composition (low complexity).

The protein belongs to the FAM90 family.

This Homo sapiens (Human) protein is Protein FAM90A3.